The sequence spans 34 residues: MEPSQSINLIILGLIVVMHAGVLALRLGISLART.

A helical transmembrane segment spans residues 9 to 29 (LIILGLIVVMHAGVLALRLGI).

It belongs to the PsaM family.

The protein localises to the cellular thylakoid membrane. This is Photosystem I reaction center subunit XII from Prochlorococcus marinus subsp. pastoris (strain CCMP1986 / NIES-2087 / MED4).